Here is a 209-residue protein sequence, read N- to C-terminus: Thiamine-phosphate synthase 1 (209 aa).

4-amino-2-methyl-5-(diphosphooxymethyl)pyrimidine-binding positions include 39 to 43 (QFREK) and Asn-74. Residues Asp-75 and Asp-94 each coordinate Mg(2+). Ser-112 lines the 4-amino-2-methyl-5-(diphosphooxymethyl)pyrimidine pocket. 138 to 140 (TQS) is a 2-[(2R,5Z)-2-carboxy-4-methylthiazol-5(2H)-ylidene]ethyl phosphate binding site. 4-amino-2-methyl-5-(diphosphooxymethyl)pyrimidine is bound at residue Lys-141. 2-[(2R,5Z)-2-carboxy-4-methylthiazol-5(2H)-ylidene]ethyl phosphate contacts are provided by residues Gly-170 and 190-191 (IS).

It belongs to the thiamine-phosphate synthase family. It depends on Mg(2+) as a cofactor.

It carries out the reaction 2-[(2R,5Z)-2-carboxy-4-methylthiazol-5(2H)-ylidene]ethyl phosphate + 4-amino-2-methyl-5-(diphosphooxymethyl)pyrimidine + 2 H(+) = thiamine phosphate + CO2 + diphosphate. It catalyses the reaction 2-(2-carboxy-4-methylthiazol-5-yl)ethyl phosphate + 4-amino-2-methyl-5-(diphosphooxymethyl)pyrimidine + 2 H(+) = thiamine phosphate + CO2 + diphosphate. The enzyme catalyses 4-methyl-5-(2-phosphooxyethyl)-thiazole + 4-amino-2-methyl-5-(diphosphooxymethyl)pyrimidine + H(+) = thiamine phosphate + diphosphate. The protein operates within cofactor biosynthesis; thiamine diphosphate biosynthesis; thiamine phosphate from 4-amino-2-methyl-5-diphosphomethylpyrimidine and 4-methyl-5-(2-phosphoethyl)-thiazole: step 1/1. Functionally, condenses 4-methyl-5-(beta-hydroxyethyl)thiazole monophosphate (THZ-P) and 2-methyl-4-amino-5-hydroxymethyl pyrimidine pyrophosphate (HMP-PP) to form thiamine monophosphate (TMP). In Streptococcus pneumoniae (strain ATCC BAA-255 / R6), this protein is Thiamine-phosphate synthase 1.